We begin with the raw amino-acid sequence, 519 residues long: MQLNPAEISELIKSRIEGLAASSDIRNQGTVVSVTDGIVRIHGLSEVMQGEMLEFPATKDGQPSYGLALNLERDSVGAVILGEYEHISEGDTVKCTGRILEVPVGPELVGRVVNALGQPIDGKGPINAKLTDVIEKVAPGVIARQSVDQPLQTGIKSIDAMVPVGRGQRELIIGDRQTGKTAVAIDAIIAQKGQGVTCIYVAIGQKASSIKNVVRALEQAGAMEYTIVVAASASESAAMQYVSAYSGCTMGEYFRDRGEDALIVYDDLSKQAVAYRQVSLLLRRPPGREAYPGDVFYLHSRLLERAARVNADYVEAFTKGEVKGKTGSLTALPIIETQAGDVSAFVPTNVISITDGQIFLETSLFNAGIRPAINAGISVSRVGGAAQTKLVKGLSGGIRTDLAQYRELAAFAQFASDLDEATRKQLDRGARVTELLKQPQYTPLPISLMGATLFAVNKGFMDDVDVKKVLAFESGLHQFLKTSHGALLERLEKNRAFDKEGKDEAELTQAITAFKKSFA.

174-181 (GDRQTGKT) provides a ligand contact to ATP.

The protein belongs to the ATPase alpha/beta chains family. As to quaternary structure, F-type ATPases have 2 components, CF(1) - the catalytic core - and CF(0) - the membrane proton channel. CF(1) has five subunits: alpha(3), beta(3), gamma(1), delta(1), epsilon(1). CF(0) has three main subunits: a(1), b(2) and c(9-12). The alpha and beta chains form an alternating ring which encloses part of the gamma chain. CF(1) is attached to CF(0) by a central stalk formed by the gamma and epsilon chains, while a peripheral stalk is formed by the delta and b chains.

The protein localises to the cell inner membrane. It catalyses the reaction ATP + H2O + 4 H(+)(in) = ADP + phosphate + 5 H(+)(out). Its function is as follows. Produces ATP from ADP in the presence of a proton gradient across the membrane. The alpha chain is a regulatory subunit. In Paracidovorax citrulli (strain AAC00-1) (Acidovorax citrulli), this protein is ATP synthase subunit alpha.